Reading from the N-terminus, the 179-residue chain is Translation initiation factor IF-3 (179 aa).

This sequence belongs to the IF-3 family. Monomer.

The protein localises to the cytoplasm. Its function is as follows. IF-3 binds to the 30S ribosomal subunit and shifts the equilibrium between 70S ribosomes and their 50S and 30S subunits in favor of the free subunits, thus enhancing the availability of 30S subunits on which protein synthesis initiation begins. This is Translation initiation factor IF-3 from Buchnera aphidicola subsp. Acyrthosiphon pisum (strain 5A).